Reading from the N-terminus, the 95-residue chain is Co-chaperonin GroES (95 aa).

This sequence belongs to the GroES chaperonin family. Heptamer of 7 subunits arranged in a ring. Interacts with the chaperonin GroEL.

Its subcellular location is the cytoplasm. In terms of biological role, together with the chaperonin GroEL, plays an essential role in assisting protein folding. The GroEL-GroES system forms a nano-cage that allows encapsulation of the non-native substrate proteins and provides a physical environment optimized to promote and accelerate protein folding. GroES binds to the apical surface of the GroEL ring, thereby capping the opening of the GroEL channel. This is Co-chaperonin GroES from Desulfotalea psychrophila (strain LSv54 / DSM 12343).